The following is a 230-amino-acid chain: Dephospho-CoA kinase (230 aa).

The disordered stretch occupies residues 1-21 (MSKYAAAPSPYSHQPQTPEHK). The region spanning 26–225 (VVGLTGGIGS…QDYLKLAQQL (200 aa)) is the DPCK domain. 34 to 39 (GSGKSA) provides a ligand contact to ATP.

This sequence belongs to the CoaE family.

Its subcellular location is the cytoplasm. It catalyses the reaction 3'-dephospho-CoA + ATP = ADP + CoA + H(+). It participates in cofactor biosynthesis; coenzyme A biosynthesis; CoA from (R)-pantothenate: step 5/5. Its function is as follows. Catalyzes the phosphorylation of the 3'-hydroxyl group of dephosphocoenzyme A to form coenzyme A. The polypeptide is Dephospho-CoA kinase (Psychrobacter cryohalolentis (strain ATCC BAA-1226 / DSM 17306 / VKM B-2378 / K5)).